The chain runs to 245 residues: tRNA pseudouridine synthase A (245 aa).

The Nucleophile role is filled by Asp52. Tyr111 is a substrate binding site.

This sequence belongs to the tRNA pseudouridine synthase TruA family. Homodimer.

The enzyme catalyses uridine(38/39/40) in tRNA = pseudouridine(38/39/40) in tRNA. In terms of biological role, formation of pseudouridine at positions 38, 39 and 40 in the anticodon stem and loop of transfer RNAs. The sequence is that of tRNA pseudouridine synthase A from Rickettsia prowazekii (strain Madrid E).